Here is a 234-residue protein sequence, read N- to C-terminus: Large ribosomal subunit protein uL1 (234 aa).

It belongs to the universal ribosomal protein uL1 family. In terms of assembly, part of the 50S ribosomal subunit.

Binds directly to 23S rRNA. The L1 stalk is quite mobile in the ribosome, and is involved in E site tRNA release. Functionally, protein L1 is also a translational repressor protein, it controls the translation of the L11 operon by binding to its mRNA. The chain is Large ribosomal subunit protein uL1 from Yersinia enterocolitica serotype O:8 / biotype 1B (strain NCTC 13174 / 8081).